Here is a 201-residue protein sequence, read N- to C-terminus: 3-isopropylmalate dehydratase small subunit (201 aa).

The protein belongs to the LeuD family. LeuD type 1 subfamily. Heterodimer of LeuC and LeuD.

The catalysed reaction is (2R,3S)-3-isopropylmalate = (2S)-2-isopropylmalate. It functions in the pathway amino-acid biosynthesis; L-leucine biosynthesis; L-leucine from 3-methyl-2-oxobutanoate: step 2/4. In terms of biological role, catalyzes the isomerization between 2-isopropylmalate and 3-isopropylmalate, via the formation of 2-isopropylmaleate. The protein is 3-isopropylmalate dehydratase small subunit of Escherichia coli O157:H7.